The chain runs to 815 residues: Phenylalanine--tRNA ligase beta subunit (815 aa).

Positions 39–148 (ATELQKFEVA…EYAVVGDNFT (110 aa)) constitute a tRNA-binding domain. The 76-residue stretch at 420–495 (LQKIPLDFSV…RIYGYDKIES (76 aa)) folds into the B5 domain. Mg(2+) is bound by residues Asp473, Asp479, Glu482, and Glu483. Positions 721 to 814 (SDFQANFRDY…ISQKFQGTLR (94 aa)) constitute an FDX-ACB domain.

Belongs to the phenylalanyl-tRNA synthetase beta subunit family. Type 1 subfamily. Tetramer of two alpha and two beta subunits. The cofactor is Mg(2+).

It is found in the cytoplasm. It catalyses the reaction tRNA(Phe) + L-phenylalanine + ATP = L-phenylalanyl-tRNA(Phe) + AMP + diphosphate + H(+). The protein is Phenylalanine--tRNA ligase beta subunit of Rickettsia typhi (strain ATCC VR-144 / Wilmington).